Here is a 130-residue protein sequence, read N- to C-terminus: Large ribosomal subunit protein bL19 (130 aa).

It belongs to the bacterial ribosomal protein bL19 family.

This protein is located at the 30S-50S ribosomal subunit interface and may play a role in the structure and function of the aminoacyl-tRNA binding site. In Burkholderia orbicola (strain MC0-3), this protein is Large ribosomal subunit protein bL19.